The sequence spans 640 residues: RAP domain-containing protein, chloroplastic (640 aa).

The transit peptide at 1-32 (MEAALLRPPPLAARGGVSIAIAFSVSRLPSAA) directs the protein to the chloroplast. The disordered stretch occupies residues 111-158 (SLQRMVASPKKKNKKKKSKKTNLKQKKAAEPKPPRDTDDDEDDEEEAD). A compositionally biased stretch (basic residues) spans 119–136 (PKKKNKKKKSKKTNLKQK). Residues 137-146 (KAAEPKPPRD) show a composition bias toward basic and acidic residues. The span at 147 to 158 (TDDDEDDEEEAD) shows a compositional bias: acidic residues. The region spanning 575–633 (LAFEIDGPSHFSRNLGTPLGHTAFKRRYIAAAGWNLVSLSHQEWENLEGEFEQLEYLRR) is the RAP domain.

Expressed in roots, leaf sheaths, veins of leaf blade, mature leaves, endodermis of culm, panicles and anthers.

The protein resides in the plastid. The protein localises to the chloroplast. Its function is as follows. Probable RNA-binding protein that plays an essential role in chloroplast development. Regulates the ribosomal proteins homeostasis and ribosomal RNA development in chloroplasts. Involved the regulation of 16S rRNA and required for the expression of chloroplast-associated photosynthetic genes. This chain is RAP domain-containing protein, chloroplastic, found in Oryza sativa subsp. japonica (Rice).